A 336-amino-acid chain; its full sequence is Telomere-binding protein cav (336 aa).

Residues 107–328 are required for binding to Su(var)205; that stretch reads RKKMVQPYPE…TITFQNSESE (222 aa). Disordered stretches follow at residues 137–158 and 199–218; these read RLDR…SPAR and SSDL…SEFQ. 2 consecutive short sequence motifs (su(var)205-binding Pro-containing repeat) follow at residues 225–231 and 289–295; these read PETAINE and PETEMNE. A compositionally biased stretch (polar residues) spans 308-327; it reads MSIGPSIDSEGTITFQNSES. The segment at 308–336 is disordered; the sequence is MSIGPSIDSEGTITFQNSESEPIDVDSIA.

Interacts (via C-terminus) with Su(var)205 dimer (via hinge and chromoshadow domain) and with moi to form the terminin, telomere-capping, complex. Interacts with HP6, which is also part of the terminin complex.

Its subcellular location is the nucleus. The protein resides in the chromosome. The protein localises to the telomere. Binds to chromosome ends in a sequence-dependent manner and is required for telomere capping. The chain is Telomere-binding protein cav from Drosophila sechellia (Fruit fly).